Consider the following 202-residue polypeptide: Transmembrane 4 L6 family member 4 (202 aa).

The Cytoplasmic segment spans residues 1–9 (MCTGGCARC). The helical transmembrane segment at 10 to 30 (LGGTLIPLAVFAVLANILLFF) threads the bilayer. Over 31 to 48 (PGGKVVDDNSHLSDEVWY) the chain is Extracellular. The helical transmembrane segment at 49 to 69 (FGGILGSGVLMIFPALVFLGL) threads the bilayer. Residues 70-93 (QNNDCCGCCGNESCGKRFAMFTST) lie on the Cytoplasmic side of the membrane. A helical transmembrane segment spans residues 94 to 114 (LFAVVGFLGAAYSFIVSAVSI). At 115 to 158 (NKGPKCFMTNNTWGYPFHDGDYLNDQALWSKCEEPRDVVPWNLT) the chain is on the extracellular side. Asparagine 156 is a glycosylation site (N-linked (GlcNAc...) asparagine). Residues 159–179 (LFSILLVIGGIQMVLCAIQVI) traverse the membrane as a helical segment. Topologically, residues 180 to 202 (NGLLGTLCGDCQCCGCCGGDRPV) are cytoplasmic.

It belongs to the L6 tetraspanin family. As to expression, expressed in liver and testis. Up-regulated in regenerating liver after partial hepatectomy.

Its subcellular location is the membrane. Functionally, regulates the adhesive and proliferative status of intestinal epithelial cells. Can mediate density-dependent cell proliferation. The polypeptide is Transmembrane 4 L6 family member 4 (Tm4sf4) (Rattus norvegicus (Rat)).